Consider the following 371-residue polypeptide: 4-hydroxy-3-methylbut-2-en-1-yl diphosphate synthase (flavodoxin) (371 aa).

[4Fe-4S] cluster is bound by residues Cys270, Cys273, Cys305, and Glu312.

Belongs to the IspG family. Requires [4Fe-4S] cluster as cofactor.

The enzyme catalyses (2E)-4-hydroxy-3-methylbut-2-enyl diphosphate + oxidized [flavodoxin] + H2O + 2 H(+) = 2-C-methyl-D-erythritol 2,4-cyclic diphosphate + reduced [flavodoxin]. It functions in the pathway isoprenoid biosynthesis; isopentenyl diphosphate biosynthesis via DXP pathway; isopentenyl diphosphate from 1-deoxy-D-xylulose 5-phosphate: step 5/6. Functionally, converts 2C-methyl-D-erythritol 2,4-cyclodiphosphate (ME-2,4cPP) into 1-hydroxy-2-methyl-2-(E)-butenyl 4-diphosphate. This chain is 4-hydroxy-3-methylbut-2-en-1-yl diphosphate synthase (flavodoxin), found in Shewanella piezotolerans (strain WP3 / JCM 13877).